An 814-amino-acid polypeptide reads, in one-letter code: Pre-rRNA-processing protein TSR1 homolog (814 aa).

The interval 1-67 is disordered; that stretch reads MADHAFHRPG…NQMNQLRKNK (67 aa). The span at 16–27 shows a compositional bias: basic residues; the sequence is NKAHKTGRHRSK. Residues 84 to 249 form the Bms1-type G domain; the sequence is APFLVCLLPM…MRRIGGQKKR (166 aa). Disordered stretches follow at residues 316–357 and 392–448; these read PYKL…DAEQ and WIPD…EEFQ. The span at 317–340 shows a compositional bias: basic and acidic residues; the sequence is YKLDKSRDGENSEVRLLDRSDPSK. The span at 395 to 426 shows a compositional bias: acidic residues; the sequence is DVEEVEDPDGKDDDDMSEDDDDDKEDDNEDFM. Residues 431–442 show a composition bias toward basic and acidic residues; sequence KSFEDEYEKRDS. At Thr444 the chain carries Phosphothreonine.

The protein belongs to the TRAFAC class translation factor GTPase superfamily. Bms1-like GTPase family. TSR1 subfamily.

It is found in the nucleus. The protein localises to the nucleolus. Required during maturation of the 40S ribosomal subunit in the nucleolus. This is Pre-rRNA-processing protein TSR1 homolog from Drosophila melanogaster (Fruit fly).